Consider the following 354-residue polypeptide: Guanine nucleotide-binding protein G(t) subunit alpha-3 (354 aa).

The disordered stretch occupies residues 1–27 (MGSGISSESKESAKRSKELEKKLQEDA). Residue glycine 2 is the site of N-myristoyl glycine attachment. A compositionally biased stretch (basic and acidic residues) spans 8–27 (ESKESAKRSKELEKKLQEDA). Residues 32–354 (RTVKLLLLGA…KENLKDCGLF (323 aa)) form the G-alpha domain. The interval 35-48 (KLLLLGAGESGKST) is G1 motif. Residues 40–47 (GAGESGKS), 175–181 (LHSRVKT), 200–204 (DVGGQ), 269–272 (NKKD), and alanine 326 contribute to the GTP site. Residues serine 47 and threonine 181 each contribute to the Mg(2+) site. The interval 173 to 181 (DVLHSRVKT) is G2 motif. A G3 motif region spans residues 196–205 (FRMFDVGGQR). Positions 265–272 (VLFLNKKD) are G4 motif. The segment at 324 to 329 (TCATDT) is G5 motif.

It belongs to the G-alpha family. G(i/o/t/z) subfamily. In terms of assembly, g proteins are composed of 3 units; alpha, beta and gamma, respectively GNAT3, GNB1 and GNG13 for Gustducin heterotrimer for bitter taste transduction. The alpha chain contains the guanine nucleotide binding site. Component of the TAS2R14-GNAT3 complex, consisting of TAS2R14, GNAT3, GNB1 and GNG2; within the complex interacts with TAS2R14; this complex plays a role in the perception of bitterness. Gustducin heterotrimer may also be composed of GNAT3, GNB3 and GNG13. Post-translationally, potential N-myristoylation may anchor alpha-subunit to the inner surface of plasma membrane. In terms of tissue distribution, expressed in taste buds (sensory organs of clustered epithelial cells) of the circumvallate, foliate and fungiform papillae of the tongue, as well as in nasoincisor, palatal and epiglottal taste buds at protein level. Expressed in enteroendocrine of the gut, in the lumenal pole of a subset of brush cells lining the stomach and the intestine at protein level. Detected in solitary cells throughout the respiratory track. Expressed also in spermatozoa.

Its subcellular location is the cytoplasm. In terms of biological role, guanine nucleotide-binding protein (G protein) alpha subunit playing a prominent role in bitter and sweet taste transduction as well as in umami (monosodium glutamate, monopotassium glutamate, and inosine monophosphate) taste transduction. Transduction by this alpha subunit involves coupling of specific cell-surface receptors with a cGMP-phosphodiesterase; Activation of phosphodiesterase lowers intracellular levels of cAMP and cGMP which may open a cyclic nucleotide-suppressible cation channel leading to influx of calcium, ultimately leading to release of neurotransmitter. Indeed, denatonium and strychnine induce transient reduction in cAMP and cGMP in taste tissue, whereas this decrease is inhibited by GNAT3 antibody. Gustducin heterotrimer transduces response to bitter and sweet compounds via regulation of phosphodiesterase for alpha subunit, as well as via activation of phospholipase C for beta and gamma subunits, with ultimate increase inositol trisphosphate and increase of intracellular Calcium. GNAT3 can functionally couple to taste receptors to transmit intracellular signal: receptor heterodimer TAS1R2/TAS1R3 senses sweetness and TAS1R1/TAS1R3 transduces umami taste, whereas the T2R family GPCRs act as bitter sensors. Also functions as lumenal sugar sensors in the gut to control the expression of the Na+-glucose transporter SGLT1 in response to dietaty sugar, as well as the secretion of Glucagon-like peptide-1, GLP-1 and glucose-dependent insulinotropic polypeptide, GIP. Thus, may modulate the gut capacity to absorb sugars, with implications for the prevention and treatment of malabsorption syndromes and diet-related disorders including diabetes and obesity. This Rattus norvegicus (Rat) protein is Guanine nucleotide-binding protein G(t) subunit alpha-3 (Gnat3).